A 341-amino-acid polypeptide reads, in one-letter code: ATPase get3 (341 aa).

33-40 provides a ligand contact to ATP; the sequence is KGGVGKTT. Aspartate 62 is an active-site residue. 2 residues coordinate ATP: glutamate 244 and asparagine 271. Cysteine 282 and cysteine 285 together coordinate Zn(2+).

It belongs to the arsA ATPase family. As to quaternary structure, homodimer.

The protein resides in the cytoplasm. Its subcellular location is the endoplasmic reticulum. Functionally, ATPase required for the post-translational delivery of tail-anchored (TA) proteins to the endoplasmic reticulum. Recognizes and selectively binds the transmembrane domain of TA proteins in the cytosol. This complex then targets to the endoplasmic reticulum by membrane-bound receptors, where the tail-anchored protein is released for insertion. This process is regulated by ATP binding and hydrolysis. ATP binding drives the homodimer towards the closed dimer state, facilitating recognition of newly synthesized TA membrane proteins. ATP hydrolysis is required for insertion. Subsequently, the homodimer reverts towards the open dimer state, lowering its affinity for the membrane-bound receptor, and returning it to the cytosol to initiate a new round of targeting. This Aspergillus niger (strain ATCC MYA-4892 / CBS 513.88 / FGSC A1513) protein is ATPase get3 (get3).